The primary structure comprises 400 residues: Sensory histidine kinase/phosphatase NtrB (400 aa).

Composition is skewed to low complexity over residues 1–10 (MARASAAAPL) and 18–27 (RAPSSSYRPV). A disordered region spans residues 1 to 27 (MARASAAAPLPRRPARPRAPSSSYRPV). The PAS domain occupies 29 to 99 (PCIDPSVMLN…IEQVQQGRHR (71 aa)). In terms of domain architecture, Histidine kinase spans 163 to 381 (MLGHEVKNPL…VFKVSLPMFD (219 aa)). H166 is modified (phosphohistidine; by autocatalysis).

Autophosphorylated.

The protein localises to the cytoplasm. It catalyses the reaction ATP + protein L-histidine = ADP + protein N-phospho-L-histidine.. Member of the two-component regulatory system NtrB/NtrC, which controls expression of the nitrogen-regulated (ntr) genes in response to nitrogen limitation. Under conditions of nitrogen limitation, NtrB autophosphorylates and transfers the phosphoryl group to NtrC. In the presence of nitrogen, acts as a phosphatase that dephosphorylates and inactivates NtrC. This Azospirillum brasilense protein is Sensory histidine kinase/phosphatase NtrB.